Here is a 176-residue protein sequence, read N- to C-terminus: Large ribosomal subunit protein uL6 (176 aa).

Residues 153–170 are compositionally biased toward basic and acidic residues; the sequence is PEPYKGKGIRYGDEEVRR. The tract at residues 153 to 176 is disordered; sequence PEPYKGKGIRYGDEEVRRKEAKKK.

Belongs to the universal ribosomal protein uL6 family. As to quaternary structure, part of the 50S ribosomal subunit.

This protein binds to the 23S rRNA, and is important in its secondary structure. It is located near the subunit interface in the base of the L7/L12 stalk, and near the tRNA binding site of the peptidyltransferase center. This chain is Large ribosomal subunit protein uL6, found in Chromohalobacter salexigens (strain ATCC BAA-138 / DSM 3043 / CIP 106854 / NCIMB 13768 / 1H11).